The primary structure comprises 270 residues: Methionine-rich protein (270 aa).

Positions 1-18 (MLSLWAIGLLGLLNQVEA) are cleaved as a signal peptide. A compositionally biased stretch (polar residues) spans 31–52 (QRSAQFSSSGWGTSPAAQNPWS). A disordered region spans residues 31-95 (QRSAQFSSSG…MPGSMPGAMP (65 aa)). A compositionally biased stretch (low complexity) spans 56–95 (PMPNTNMPNMNTGSLPGSMPGAMPGSMPGAMPGSMPGAMP).

In terms of tissue distribution, component of the acid-soluble organic matrix of calcified layers of the shell (at protein level).

The protein localises to the secreted. This Lottia gigantea (Giant owl limpet) protein is Methionine-rich protein.